The following is a 363-amino-acid chain: MVQRMTFDAASYTAQLQDKVTRLRDLLAPFDAPEPQVFDSPLQNFRLRAEFRLWREGGERHYAMFSQDDKRTPILIEEFPIASLRINQLMPQLKAAWQASAALSHKLFQVEFLTTLAGDAMITLCYHRPLDEHWHTAANKLAADLNVSIIGRSKGKRDVIGRDYVVEKLDVGGRTFSYRQPEGAFTQPNGTVNQKMLNWAFEALGDRSDDLLELYCGNGNFTLPLATRVRKVLATEISKTSVNAALSNLDENAVDNVTLVRLSAEELTEALNEVRPFRRLHGIDLKSYEFGSVFVDPPRAGMDPDTCELTRRFENILYISCNPETLAANIAQLHDTHRITQCAMFDQFPWTHHMESGVLLTRR.

The S-adenosyl-L-methionine site is built by Gln187, Tyr215, Asn220, Glu236, and Asp296. Cys321 acts as the Nucleophile in catalysis. Glu355 (proton acceptor) is an active-site residue.

It belongs to the class I-like SAM-binding methyltransferase superfamily. RNA M5U methyltransferase family. TrmA subfamily.

The enzyme catalyses uridine(54) in tRNA + S-adenosyl-L-methionine = 5-methyluridine(54) in tRNA + S-adenosyl-L-homocysteine + H(+). It catalyses the reaction uridine(341) in tmRNA + S-adenosyl-L-methionine = 5-methyluridine(341) in tmRNA + S-adenosyl-L-homocysteine + H(+). Its function is as follows. Dual-specificity methyltransferase that catalyzes the formation of 5-methyluridine at position 54 (m5U54) in all tRNAs, and that of position 341 (m5U341) in tmRNA (transfer-mRNA). This is tRNA/tmRNA (uracil-C(5))-methyltransferase from Pseudomonas fluorescens.